We begin with the raw amino-acid sequence, 388 residues long: Putrescine N-methyltransferase 1 (388 aa).

3 stretches are compositionally biased toward polar residues: residues 1 to 14 (MEVI…STIF), 23 to 39 (GYQN…QNGT), and 46 to 88 (HQNG…GNEL). The segment at 1–88 (MEVISTNTNG…TISHDNGNEL (88 aa)) is disordered. Positions 99 to 336 (PGWFSEFSAL…GVIGYMLCST (238 aa)) constitute a PABS domain. S-adenosyl-L-methionine-binding positions include Q130, E205, and 236-237 (DG). The Proton acceptor role is filled by D255. Y324 is a binding site for S-adenosyl-L-methionine.

Belongs to the class I-like SAM-binding methyltransferase superfamily. Spermidine/spermine synthase family. In terms of tissue distribution, mainly expressed in roots.

It catalyses the reaction putrescine + S-adenosyl-L-methionine = N-methylputrescine + S-adenosyl-L-homocysteine + H(+). It participates in alkaloid biosynthesis; nicotine biosynthesis. Functionally, involved in the biosynthesis of pyridine alkaloid natural products, leading mainly to the production of anabasine, anatabine, nicotine and nornicotine, effective deterrents against herbivores with antiparasitic and pesticide properties (neurotoxins); nornicotine serves as the precursor in the synthesis of the carcinogen compound N'-nitrosonornicotine (NNN). Methyltransferase that mediates the conversion of putrescine to N-methylputrescine. This Nicotiana attenuata (Coyote tobacco) protein is Putrescine N-methyltransferase 1.